The chain runs to 490 residues: Cytochrome P450 2C8 (490 aa).

Substrate is bound by residues Ser-100, Asn-204, and Arg-241. A Phosphoserine modification is found at Ser-100. Heme is bound at residue Cys-435.

Belongs to the cytochrome P450 family. Heme serves as cofactor.

The protein localises to the endoplasmic reticulum membrane. It localises to the microsome membrane. The enzyme catalyses an organic molecule + reduced [NADPH--hemoprotein reductase] + O2 = an alcohol + oxidized [NADPH--hemoprotein reductase] + H2O + H(+). It carries out the reaction (5Z,8Z,11Z,14Z)-eicosatetraenoate + reduced [NADPH--hemoprotein reductase] + O2 = (11R,12S)-epoxy-(5Z,8Z,14Z)-eicosatrienoate + oxidized [NADPH--hemoprotein reductase] + H2O + H(+). The catalysed reaction is (5Z,8Z,11Z,14Z)-eicosatetraenoate + reduced [NADPH--hemoprotein reductase] + O2 = (11S,12R)-epoxy-(5Z,8Z,14Z)-eicosatrienoate + oxidized [NADPH--hemoprotein reductase] + H2O + H(+). It catalyses the reaction (5Z,8Z,11Z,14Z)-eicosatetraenoate + reduced [NADPH--hemoprotein reductase] + O2 = (14R,15S)-epoxy-(5Z,8Z,11Z)-eicosatrienoate + oxidized [NADPH--hemoprotein reductase] + H2O + H(+). The enzyme catalyses (5Z,8Z,11Z,14Z)-eicosatetraenoate + reduced [NADPH--hemoprotein reductase] + O2 = (14S,15R)-epoxy-(5Z,8Z,11Z)-eicosatrienoate + oxidized [NADPH--hemoprotein reductase] + H2O + H(+). It carries out the reaction (5Z,8Z,11Z,14Z,17Z)-eicosapentaenoate + reduced [NADPH--hemoprotein reductase] + O2 = 11,12-epoxy-(5Z,8Z,14Z,17Z)-eicosatetraenoate + oxidized [NADPH--hemoprotein reductase] + H2O + H(+). The catalysed reaction is (5Z,8Z,11Z,14Z,17Z)-eicosapentaenoate + reduced [NADPH--hemoprotein reductase] + O2 = 14,15-epoxy-(5Z,8Z,11Z,17Z)-eicosatetraenoate + oxidized [NADPH--hemoprotein reductase] + H2O + H(+). It catalyses the reaction (5Z,8Z,11Z,14Z,17Z)-eicosapentaenoate + reduced [NADPH--hemoprotein reductase] + O2 = (17R,18S)-epoxy-(5Z,8Z,11Z,14Z)-eicosatetraenoate + oxidized [NADPH--hemoprotein reductase] + H2O + H(+). The enzyme catalyses (5Z,8Z,11Z,14Z,17Z)-eicosapentaenoate + reduced [NADPH--hemoprotein reductase] + O2 = (17S,18R)-epoxy-(5Z,8Z,11Z,14Z)-eicosatetraenoate + oxidized [NADPH--hemoprotein reductase] + H2O + H(+). It carries out the reaction (4Z,7Z,10Z,13Z,16Z,19Z)-docosahexaenoate + reduced [NADPH--hemoprotein reductase] + O2 = (19R,20S)-epoxy-(4Z,7Z,10Z,13Z,16Z)-docosapentaenoate + oxidized [NADPH--hemoprotein reductase] + H2O + H(+). The catalysed reaction is (4Z,7Z,10Z,13Z,16Z,19Z)-docosahexaenoate + reduced [NADPH--hemoprotein reductase] + O2 = (19S,20R)-epoxy-(4Z,7Z,10Z,13Z,16Z)-docosapentaenoate + oxidized [NADPH--hemoprotein reductase] + H2O + H(+). It catalyses the reaction all-trans-retinoate + reduced [NADPH--hemoprotein reductase] + O2 = all-trans-4-hydroxyretinoate + oxidized [NADPH--hemoprotein reductase] + H2O + H(+). The enzyme catalyses 17beta-estradiol + reduced [NADPH--hemoprotein reductase] + O2 = 16alpha,17beta-estriol + oxidized [NADPH--hemoprotein reductase] + H2O + H(+). It carries out the reaction estrone + reduced [NADPH--hemoprotein reductase] + O2 = 16alpha-hydroxyestrone + oxidized [NADPH--hemoprotein reductase] + H2O + H(+). The protein operates within steroid metabolism. It participates in lipid metabolism; arachidonate metabolism. It functions in the pathway cofactor metabolism; retinol metabolism. A cytochrome P450 monooxygenase involved in the metabolism of various endogenous substrates, including fatty acids, steroid hormones and vitamins. Mechanistically, uses molecular oxygen inserting one oxygen atom into a substrate, and reducing the second into a water molecule, with two electrons provided by NADPH via cytochrome P450 reductase (NADPH--hemoprotein reductase). Primarily catalyzes the epoxidation of double bonds of polyunsaturated fatty acids (PUFA) with a preference for the last double bond. Catalyzes the hydroxylation of carbon-hydrogen bonds. Metabolizes all trans-retinoic acid toward its 4-hydroxylated form. Displays 16-alpha hydroxylase activity toward estrogen steroid hormones, 17beta-estradiol (E2) and estrone (E1). Plays a role in the oxidative metabolism of xenobiotics. It is the principal enzyme responsible for the metabolism of the anti-cancer drug paclitaxel (taxol). This chain is Cytochrome P450 2C8, found in Homo sapiens (Human).